The chain runs to 371 residues: Barbiturase 2 (371 aa).

The tract at residues 1–104 (MTRPIEVRKV…TIFAYAPEGR (104 aa)) is RU A. Residues Arg53 and 83–84 (SG) contribute to the substrate site. Residues 112 to 247 (RVTVGYAMSE…AQIVVVGNAR (136 aa)) are RU B. Lys162 is an active-site residue. Residues Asn194 and 230-231 (SS) each bind substrate. The active-site Nucleophile is Ser230. The interval 253–371 (FRVGHSIMKD…PVIAIVDLEA (119 aa)) is RU C. Glu303 provides a ligand contact to Mg(2+). Substrate contacts are provided by residues Lys330 and 349-350 (SV). 5 residues coordinate Mg(2+): Ala352, Gln355, Gly356, Pro357, and Gly360.

Belongs to the cyclic amide hydrolase (CyAH) family. As to quaternary structure, homotetramer.

The catalysed reaction is barbiturate + H2O = 3-oxo-3-ureidopropanoate. It functions in the pathway pyrimidine metabolism; uracil degradation via oxidative pathway; malonate and urea from uracil: step 2/3. In terms of biological role, responsible for the hydrolysis of barbituric acid (2,4,6-trihydroxy-1,3-pyrimidine), an intermediate in the oxidative catabolism of pyrimidines. Catalyzes the hydrolytic opening of the pyrimidine ring of barbituric acid to yield ureidomalonic acid. Can also use cyanuric acid as a substrate, albeit with lower efficiency. This is Barbiturase 2 from Nocardioides sp. (strain ATCC BAA-499 / JS614).